The sequence spans 347 residues: Ribosomal RNA large subunit methyltransferase M (347 aa).

S-adenosyl-L-methionine contacts are provided by residues serine 184, 217-220 (APGG), aspartate 236, aspartate 256, and aspartate 272. Lysine 301 serves as the catalytic Proton acceptor.

Belongs to the class I-like SAM-binding methyltransferase superfamily. RNA methyltransferase RlmE family. RlmM subfamily. In terms of assembly, monomer.

The protein localises to the cytoplasm. The catalysed reaction is cytidine(2498) in 23S rRNA + S-adenosyl-L-methionine = 2'-O-methylcytidine(2498) in 23S rRNA + S-adenosyl-L-homocysteine + H(+). Its function is as follows. Catalyzes the 2'-O-methylation at nucleotide C2498 in 23S rRNA. This is Ribosomal RNA large subunit methyltransferase M from Xanthomonas euvesicatoria pv. vesicatoria (strain 85-10) (Xanthomonas campestris pv. vesicatoria).